The following is a 549-amino-acid chain: SET and MYND domain-containing protein DDB_G0277331 (549 aa).

The SET domain occupies 27 to 283; it reads KGIELRYCDG…KDEELFINYS (257 aa). Zn(2+) contacts are provided by C71, C74, C90, C93, C99, C103, H111, and C115. An MYND-type zinc finger spans residues 71-115; the sequence is CDECLKNKLDLEEGKTLKRCSNCKLVYYCSTDCQTKAWKIHKQEC. The stretch at 340–401 forms a coiled coil; sequence NINNNNNNNN…IIKNLQNKLS (62 aa).

Belongs to the class V-like SAM-binding methyltransferase superfamily.

Probable methyltransferase. This is SET and MYND domain-containing protein DDB_G0277331 from Dictyostelium discoideum (Social amoeba).